We begin with the raw amino-acid sequence, 230 residues long: Phosphoribosylaminoimidazole-succinocarboxamide synthase (230 aa).

Belongs to the SAICAR synthetase family.

The catalysed reaction is 5-amino-1-(5-phospho-D-ribosyl)imidazole-4-carboxylate + L-aspartate + ATP = (2S)-2-[5-amino-1-(5-phospho-beta-D-ribosyl)imidazole-4-carboxamido]succinate + ADP + phosphate + 2 H(+). Its pathway is purine metabolism; IMP biosynthesis via de novo pathway; 5-amino-1-(5-phospho-D-ribosyl)imidazole-4-carboxamide from 5-amino-1-(5-phospho-D-ribosyl)imidazole-4-carboxylate: step 1/2. This is Phosphoribosylaminoimidazole-succinocarboxamide synthase from Thermotoga petrophila (strain ATCC BAA-488 / DSM 13995 / JCM 10881 / RKU-1).